We begin with the raw amino-acid sequence, 79 residues long: D-alanyl carrier protein (79 aa).

The Carrier domain occupies Met1–Arg77. Ser35 is modified (O-(pantetheine 4'-phosphoryl)serine).

Belongs to the DltC family. Post-translationally, 4'-phosphopantetheine is transferred from CoA to a specific serine of apo-DCP.

Its subcellular location is the cytoplasm. Its pathway is cell wall biogenesis; lipoteichoic acid biosynthesis. Its function is as follows. Carrier protein involved in the D-alanylation of lipoteichoic acid (LTA). The loading of thioester-linked D-alanine onto DltC is catalyzed by D-alanine--D-alanyl carrier protein ligase DltA. The DltC-carried D-alanyl group is further transferred to cell membrane phosphatidylglycerol (PG) by forming an ester bond, probably catalyzed by DltD. D-alanylation of LTA plays an important role in modulating the properties of the cell wall in Gram-positive bacteria, influencing the net charge of the cell wall. The chain is D-alanyl carrier protein from Lactobacillus gasseri (strain ATCC 33323 / DSM 20243 / BCRC 14619 / CIP 102991 / JCM 1131 / KCTC 3163 / NCIMB 11718 / NCTC 13722 / AM63).